The sequence spans 471 residues: Ribulose bisphosphate carboxylase large chain 2 (471 aa).

Substrate-binding residues include asparagine 116 and threonine 166. Residue lysine 168 is the Proton acceptor of the active site. Lysine 170 contacts substrate. Mg(2+) is bound by residues lysine 194, aspartate 196, and glutamate 197. Lysine 194 carries the post-translational modification N6-carboxylysine. The active-site Proton acceptor is the histidine 287. Arginine 288, histidine 320, and serine 372 together coordinate substrate.

Belongs to the RuBisCO large chain family. Type I subfamily. As to quaternary structure, heterohexadecamer of 8 large chains and 8 small chains. Forms a CsoS2-CsoS1-RuBisCO complex. The cofactor is Mg(2+).

It localises to the carboxysome. It catalyses the reaction 2 (2R)-3-phosphoglycerate + 2 H(+) = D-ribulose 1,5-bisphosphate + CO2 + H2O. The enzyme catalyses D-ribulose 1,5-bisphosphate + O2 = 2-phosphoglycolate + (2R)-3-phosphoglycerate + 2 H(+). RuBisCO catalyzes two reactions: the carboxylation of D-ribulose 1,5-bisphosphate, the primary event in carbon dioxide fixation, as well as the oxidative fragmentation of the pentose substrate. Both reactions occur simultaneously and in competition at the same active site. Replacing the endogenous type I ccbLS genes in H.neapolitanus with this carboxysomally targeted enzyme reconstitutes RuBisCO with about 25% of normal activity; the active enzyme is targeted to carboxysomes. The chain is Ribulose bisphosphate carboxylase large chain 2 from Hydrogenovibrio crunogenus (strain DSM 25203 / XCL-2) (Thiomicrospira crunogena).